The primary structure comprises 379 residues: V-type proton ATPase subunit S1 (379 aa).

An N-terminal signal peptide occupies residues 1 to 17; the sequence is MLWKSLIALCVIGAAVA. The Lumenal portion of the chain corresponds to 18 to 333; it reads EQTPVFLWGA…WDCVGFVTPG (316 aa). N-linked (GlcNAc...) asparagine glycans are attached at residues asparagine 225 and asparagine 284. Cysteine 282 and cysteine 326 are joined by a disulfide. Residues 334–354 traverse the membrane as a helical segment; sequence ILMGLFVVALLLVIMFVGVCW. The Cytoplasmic segment spans residues 355–379; sequence MMDINTMDRFDDPKGKTITINAAAE.

Belongs to the vacuolar ATPase subunit S1 family. As to quaternary structure, accessory component of the multisubunit proton-transporting vacuolar (V)-ATPase protein pump. May interact with ATP6AP2.

Its subcellular location is the endoplasmic reticulum membrane. Functionally, accessory subunit of the proton-transporting vacuolar (V)-ATPase protein pump, which is required for luminal acidification of secretory vesicles. The polypeptide is V-type proton ATPase subunit S1 (Drosophila melanogaster (Fruit fly)).